A 334-amino-acid polypeptide reads, in one-letter code: Protein-methionine-sulfoxide reductase catalytic subunit MsrP (334 aa).

A signal peptide (tat-type signal) is located at residues 1-44; it reads MKKNQFLKESDVTAESVFFMKRRQVLKALGISAAALSLPHAAHA. Mo-molybdopterin is bound by residues asparagine 88, 91-92, cysteine 146, threonine 181, asparagine 233, arginine 238, and 249-251; these read YE and GIK.

It belongs to the MsrP family. As to quaternary structure, heterodimer of a catalytic subunit (MsrP) and a heme-binding subunit (MsrQ). The cofactor is Mo-molybdopterin. In terms of processing, predicted to be exported by the Tat system. The position of the signal peptide cleavage has not been experimentally proven.

It localises to the periplasm. The enzyme catalyses L-methionyl-[protein] + a quinone + H2O = L-methionyl-(S)-S-oxide-[protein] + a quinol. It carries out the reaction L-methionyl-[protein] + a quinone + H2O = L-methionyl-(R)-S-oxide-[protein] + a quinol. Part of the MsrPQ system that repairs oxidized periplasmic proteins containing methionine sulfoxide residues (Met-O), using respiratory chain electrons. Thus protects these proteins from oxidative-stress damage caused by reactive species of oxygen and chlorine generated by the host defense mechanisms. MsrPQ is essential for the maintenance of envelope integrity under bleach stress, rescuing a wide series of structurally unrelated periplasmic proteins from methionine oxidation, including the primary periplasmic chaperone SurA and the lipoprotein Pal. The catalytic subunit MsrP is non-stereospecific, being able to reduce both (R-) and (S-) diastereoisomers of methionine sulfoxide. The chain is Protein-methionine-sulfoxide reductase catalytic subunit MsrP from Escherichia coli O17:K52:H18 (strain UMN026 / ExPEC).